Reading from the N-terminus, the 164-residue chain is Phosphopantetheine adenylyltransferase (164 aa).

Position 9 (S9) interacts with substrate. Residues 9-10 and H17 each bind ATP; that span reads SF. 3 residues coordinate substrate: K41, V78, and R92. Residues 93-95, E103, and 128-134 contribute to the ATP site; these read GLR and SRPITAT.

This sequence belongs to the bacterial CoaD family. In terms of assembly, homohexamer. Mg(2+) is required as a cofactor.

It is found in the cytoplasm. The catalysed reaction is (R)-4'-phosphopantetheine + ATP + H(+) = 3'-dephospho-CoA + diphosphate. It participates in cofactor biosynthesis; coenzyme A biosynthesis; CoA from (R)-pantothenate: step 4/5. Its function is as follows. Reversibly transfers an adenylyl group from ATP to 4'-phosphopantetheine, yielding dephospho-CoA (dPCoA) and pyrophosphate. The chain is Phosphopantetheine adenylyltransferase from Rhizobium leguminosarum bv. trifolii (strain WSM2304).